The sequence spans 307 residues: UDP-N-acetylenolpyruvoylglucosamine reductase (307 aa).

The 165-residue stretch at 33 to 197 folds into the FAD-binding PCMH-type domain; it reads TGGNADFYIT…LEAAFTLAPG (165 aa). The active site involves Arg176. Ser226 functions as the Proton donor in the catalytic mechanism. Glu296 is a catalytic residue.

This sequence belongs to the MurB family. FAD is required as a cofactor.

The protein localises to the cytoplasm. It catalyses the reaction UDP-N-acetyl-alpha-D-muramate + NADP(+) = UDP-N-acetyl-3-O-(1-carboxyvinyl)-alpha-D-glucosamine + NADPH + H(+). It functions in the pathway cell wall biogenesis; peptidoglycan biosynthesis. Cell wall formation. The protein is UDP-N-acetylenolpyruvoylglucosamine reductase of Staphylococcus aureus (strain NCTC 8325 / PS 47).